Reading from the N-terminus, the 447-residue chain is Na(+)-translocating NADH-quinone reductase subunit A (447 aa).

This sequence belongs to the NqrA family. As to quaternary structure, composed of six subunits; NqrA, NqrB, NqrC, NqrD, NqrE and NqrF.

The catalysed reaction is a ubiquinone + n Na(+)(in) + NADH + H(+) = a ubiquinol + n Na(+)(out) + NAD(+). NQR complex catalyzes the reduction of ubiquinone-1 to ubiquinol by two successive reactions, coupled with the transport of Na(+) ions from the cytoplasm to the periplasm. NqrA to NqrE are probably involved in the second step, the conversion of ubisemiquinone to ubiquinol. The protein is Na(+)-translocating NADH-quinone reductase subunit A of Haemophilus influenzae (strain PittEE).